The chain runs to 1377 residues: DNA-directed RNA polymerase subunit beta'' (1377 aa).

4 residues coordinate Zn(2+): C220, C291, C298, and C301.

It belongs to the RNA polymerase beta' chain family. RpoC2 subfamily. In terms of assembly, in plastids the minimal PEP RNA polymerase catalytic core is composed of four subunits: alpha, beta, beta', and beta''. When a (nuclear-encoded) sigma factor is associated with the core the holoenzyme is formed, which can initiate transcription. The cofactor is Zn(2+).

It is found in the plastid. The protein localises to the chloroplast. The enzyme catalyses RNA(n) + a ribonucleoside 5'-triphosphate = RNA(n+1) + diphosphate. Its function is as follows. DNA-dependent RNA polymerase catalyzes the transcription of DNA into RNA using the four ribonucleoside triphosphates as substrates. The chain is DNA-directed RNA polymerase subunit beta'' from Nandina domestica (Heavenly bamboo).